The primary structure comprises 351 residues: Pinopsin (351 aa).

Topologically, residues 1-30 (MSSNSSQAPPNGTPGPFDGPQWPYQAPQST) are extracellular. N-linked (GlcNAc...) asparagine glycosylation is present at Asn4. A helical membrane pass occupies residues 31–55 (YVGVAVLMGTVVACASVVNGLVIVV). The Cytoplasmic segment spans residues 56–67 (SICYKKLRSPLN). A helical membrane pass occupies residues 68-92 (YILVNLAVADLLVTLCGSSVSLSNN). Residues 93-107 (INGFFVFGRRMCELE) are Extracellular-facing. Cys104 and Cys181 are disulfide-bonded. The helical transmembrane segment at 108–127 (GFMVSLTGIVGLWSLAILAL) threads the bilayer. At 128–146 (ERYVVVCKPLGDFQFQRRH) the chain is on the cytoplasmic side. Residues 147–170 (AVSGCAFTWGWALLWSAPPLLGWS) form a helical membrane-spanning segment. Residues 171 to 194 (SYVPEGLRTSCGPNWYTGGSNNNS) lie on the Extracellular side of the membrane. Asn192 is a glycosylation site (N-linked (GlcNAc...) asparagine). The helical transmembrane segment at 195-222 (YILSLFVTCFVLPLSLILFSYTNLLLTL) threads the bilayer. Residues 223-244 (RAAAAQQKEADTTQRAEREVTR) lie on the Cytoplasmic side of the membrane. Residues 245–268 (MVIVMVMAFLLCWLPYSTFALVVA) traverse the membrane as a helical segment. Residues 269-276 (THKGIIIQ) lie on the Extracellular side of the membrane. A helical transmembrane segment spans residues 277 to 301 (PVLASLPSYFSKTATVYNPIIYVFM). Lys288 carries the N6-(retinylidene)lysine modification. Residues 302-351 (NKQFQSCLLEMLCCGYQPQRTGKASPGTPGPHADVTAAGLRNKVMPAHPV) lie on the Cytoplasmic side of the membrane. 2 S-palmitoyl cysteine lipidation sites follow: Cys314 and Cys315.

Belongs to the G-protein coupled receptor 1 family. Opsin subfamily. Phosphorylated on some or all of the serine and threonine residues present in the C-terminal region. In terms of tissue distribution, pineal gland.

The protein resides in the membrane. Its function is as follows. Produces a slow and prolonged phototransduction response consistent with the non-visual function of pineal photoreception. This chain is Pinopsin, found in Gallus gallus (Chicken).